We begin with the raw amino-acid sequence, 478 residues long: Lysosome membrane protein 2 (478 aa).

The Cytoplasmic portion of the chain corresponds to A2–C4. The helical transmembrane segment at C5–R27 threads the bilayer. The Lumenal segment spans residues V28–L433. N-linked (GlcNAc...) asparagine glycans are attached at residues N45, N68, N105, and N122. The segment at I155–F191 is important for interaction with GBA1. 4 N-linked (GlcNAc...) asparagine glycosylation sites follow: N206, N224, N249, and N304. Intrachain disulfides connect C274–C329 and C312–C318. Residues N325, N412, and N430 are each glycosylated (N-linked (GlcNAc...) asparagine). A helical transmembrane segment spans residues I434–R459. Topologically, residues G460–T478 are cytoplasmic.

It belongs to the CD36 family. As to quaternary structure, interacts with GBA1. In terms of processing, acylated by palmitic acid group(s).

The protein localises to the lysosome membrane. Acts as a lysosomal receptor for glucosylceramidase (GBA1) targeting. The chain is Lysosome membrane protein 2 (Scarb2) from Rattus norvegicus (Rat).